A 188-amino-acid chain; its full sequence is UPF0340 protein BH3766 (188 aa).

The protein belongs to the UPF0340 family.

This Halalkalibacterium halodurans (strain ATCC BAA-125 / DSM 18197 / FERM 7344 / JCM 9153 / C-125) (Bacillus halodurans) protein is UPF0340 protein BH3766.